A 331-amino-acid chain; its full sequence is Thiamine-monophosphate kinase (331 aa).

The Mg(2+) site is built by Asp-43, Thr-59, Thr-60, and Asp-61. Residue His-68 coordinates substrate. Residues Asp-90, Asp-138, and Asp-231 each contribute to the Mg(2+) site. 137 to 138 (GD) contributes to the ATP binding site. Ser-233 serves as a coordination point for ATP. Position 234 (Asp-234) interacts with Mg(2+). Positions 284 and 328 each coordinate substrate.

Belongs to the thiamine-monophosphate kinase family.

The enzyme catalyses thiamine phosphate + ATP = thiamine diphosphate + ADP. The protein operates within cofactor biosynthesis; thiamine diphosphate biosynthesis; thiamine diphosphate from thiamine phosphate: step 1/1. In terms of biological role, catalyzes the ATP-dependent phosphorylation of thiamine-monophosphate (TMP) to form thiamine-pyrophosphate (TPP), the active form of vitamin B1. This chain is Thiamine-monophosphate kinase, found in Corynebacterium glutamicum (strain ATCC 13032 / DSM 20300 / JCM 1318 / BCRC 11384 / CCUG 27702 / LMG 3730 / NBRC 12168 / NCIMB 10025 / NRRL B-2784 / 534).